The following is a 348-amino-acid chain: Protein RecA (348 aa).

Position 66–73 (66–73) interacts with ATP; sequence GPESSGKT.

Belongs to the RecA family.

Its subcellular location is the cytoplasm. Its function is as follows. Can catalyze the hydrolysis of ATP in the presence of single-stranded DNA, the ATP-dependent uptake of single-stranded DNA by duplex DNA, and the ATP-dependent hybridization of homologous single-stranded DNAs. It interacts with LexA causing its activation and leading to its autocatalytic cleavage. The chain is Protein RecA from Legionella pneumophila.